The sequence spans 280 residues: DNA repair protein XRCC2 (280 aa).

The residue at position 10 (Ser-10) is a Phosphoserine.

The protein belongs to the RecA family. RAD51 subfamily. In terms of assembly, interacts with RAD51D. Part of the BCDX2 complex consisting of RAD51B, RAD51C, RAD51D and XRCC2; the complex has a ring-like structure arranged into a flat disk around a central channel. In the absence of DNA, the BCDX2 subcomplex XRCC2:RAD51D formed a multimeric ring structure; in the presence of single-stranded DNA it formed a filamentous structure with the ssDNA.

Its subcellular location is the nucleus. It localises to the cytoplasm. The protein resides in the cytoskeleton. The protein localises to the microtubule organizing center. It is found in the centrosome. Functionally, involved in the homologous recombination repair (HRR) pathway of double-stranded DNA, thought to repair chromosomal fragmentation, translocations and deletions. Part of the RAD51 paralog protein complex BCDX2 which acts in the BRCA1-BRCA2-dependent HR pathway. Upon DNA damage, BCDX2 acts downstream of BRCA2 recruitment and upstream of RAD51 recruitment. BCDX2 binds predominantly to the intersection of the four duplex arms of the Holliday junction and to junction of replication forks. The BCDX2 complex was originally reported to bind single-stranded DNA, single-stranded gaps in duplex DNA and specifically to nicks in duplex DNA. This is DNA repair protein XRCC2 (XRCC2) from Homo sapiens (Human).